Consider the following 131-residue polypeptide: MRVLLILVSLAALAHAESFLKSKTGYQGVQTLPGFIGGSQPHLGGGIGGGRPFISQPNLGGGIGGGIGGGKPFIPQPNLGGGIGSTRPFPRPQYGDYGSRNSCNRQCPSTYGGRGICCRRWGSCCPTNYKG.

The signal sequence occupies residues 1–16 (MRVLLILVSLAALAHA). 3 cysteine pairs are disulfide-bonded: Cys103-Cys117, Cys107-Cys124, and Cys118-Cys125. Residue Lys130 is modified to Lysine amide.

As to expression, strongly expressed in hemocytes, with weaker expression in gills and epidermis. Expressed at low levels in hepatopancreas.

It localises to the cytoplasmic granule. In terms of biological role, antimicrobial peptide. Has strong antibacterial activity against the Gram-positive bacterium C.glutamicum (MIC=0.4 uM) and the Gram-negative bacterium E.coli (MIC=12.5 uM). Has weak antibacterial activity against the Gram-positive bacterium S.aureus (MIC&gt;50 uM) and the Gram-negative bacterium P.aeruginosa (MIC&gt;50 uM). Has antifungal activity against S.cerevisiae (MIC=12.5) and C.albicans (MIC=6.3 uM). Has weak antifungal activity against the mold B.cinerea. Presents chitin-binding activity. This Hyas araneus (Atlantic lyre crab) protein is Hyastatin.